A 708-amino-acid polypeptide reads, in one-letter code: MDKVLNREESLQLMDLLGLERSAWGNIPLMRKAYLKKCKEFHPDKGGDEEKMKKMNTLYKKMEDGVKYAHQPDFGGFWDATEIPTYGTDEWEQWWNAFNEENLFCSEEMPSSDDEATADSQHSTPPKKKRKVEDPKDFPSELLSFLSHAVFSNRTLACFAIYTTKEKAALLYKKIMEKYSVTFISRHNSYNHNILFFLTPHRHRVSAINNYAQKLCTFSFLICKGVNKEYLMYSALTRDPFSVIEESLPGGLKEHDFNPEEAEETKQVSWKLVTEYAMETKCDDVLLLLGMYLEFQYSFEMCLKCIKKEQPSHYKYHEKHYANAAIFADSKNQKTICQQAVDTVLAKKRVDSLQLTREQMLTNRFNDLLDRMDIMFGSTGSADIEEWMAGVAWLHCLLPKMDSVVYDFLKCMVYNIPKKRYWLFKGPIDSGKTTLAAALLELCGGKALNVNLPLDRLNFELGVAIDQFLVVFEDVKGTGGESRDLPSGQGINNLDNLRDYLDGSVKVNLEKKHLNKRTQIFPPGIVTMNEYSVPKTLQARFVKQIDFRPKDYLKHCLERSEFLLEKRIIQSGIALLLMLIWYRPVAEFAQSIQSRIVEWKERLDKEFSLSVYQKMKFNVAMGIGVLDWLRNSDDDDEDSQENADKNEDGGEKNMEDSGHETGIDSQSQGSFQAPQSSQSVHDHNQPYHICRGFTCFKKPPTPPPEPET.

M1 carries the N-acetylmethionine; by host modification. Positions 12 to 75 (QLMDLLGLER…VKYAHQPDFG (64 aa)) constitute a J domain. The tract at residues 63–89 (EDGVKYAHQPDFGGFWDATEIPTYGTD) is binding of LT to the CUL7 complex. Positions 103-107 (LFCSE) match the LXCXE motif motif. S106, S112, S120, and S123 each carry phosphoserine; by host. The interval 109 to 134 (MPSSDDEATADSQHSTPPKKKRKVED) is disordered. The residue at position 124 (T124) is a Phosphothreonine; by host. Residues 125 to 132 (PPKKKRKV) carry the Nuclear localization signal motif. Positions 139–254 (PSELLSFLSH…EESLPGGLKE (116 aa)) form a DNA-binding region, T-ag OBD. A T-ag D1-type zinc finger spans residues 265-357 (TKQVSWKLVT…KRVDSLQLTR (93 aa)). 4 residues coordinate Zn(2+): C302, C305, H313, and H317. The tract at residues 337–672 (CQQAVDTVLA…IDSQSQGSFQ (336 aa)) is binding to host TP53 protein. The 161-residue stretch at 400 to 560 (KMDSVVYDFL…DYLKHCLERS (161 aa)) folds into the SF3 helicase domain. Residues 418–616 (KKRYWLFKGP…FSLSVYQKMK (199 aa)) form an ATPase activity region. 426–433 (GPIDSGKT) serves as a coordination point for ATP. The segment at 627-708 (DWLRNSDDDD…PPTPPPEPET (82 aa)) is C-terminal region. The disordered stretch occupies residues 630-685 (RNSDDDDEDSQENADKNEDGGEKNMEDSGHETGIDSQSQGSFQAPQSSQSVHDHNQ). S639 carries the post-translational modification Phosphoserine; by host. The segment covering 642-662 (NADKNEDGGEKNMEDSGHETG) has biased composition (basic and acidic residues). A compositionally biased stretch (polar residues) spans 663-679 (IDSQSQGSFQAPQSSQS). A phosphoserine; by host mark is found at S676, S677, and S679. K697 carries the post-translational modification N6-acetyllysine; by host. The segment at 699–708 (PPTPPPEPET) is CPD. Position 701 is a phosphothreonine; by host (T701).

In terms of assembly, isoform large T antigen forms homohexamers in the presence of ATP. Interacts with host HDAC1. Interacts (via LXCXE domain) with host RB1; the interaction induces the aberrant dissociation of RB1-E2F1 complex thereby disrupting RB1's activity. Interacts (via LXCXE domain) with host pRB-related proteins RBL1 and RBL2. Interacts (via C-terminus) with host TOP1 and POLA1 allowing DNA replication. Interacts with host TP53, inhibiting TP53 binding to DNA. Interacts with host preinitiation complex components TBP, TFIIA and TFIID to regulate transcription initiation. LT interacts (via CPD region) with host FBW7gamma isoform (via WD repeats); seems to function as a competitive inhibitor of FBW7gamma function for physiologic substrates. LT interacts with host E3 ubiquitin ligase CUL7; this interaction seems to inhibit CUL7. Component of a SCF(CUL7)-like complex composed of SV40 Lt and host proteins CUL7, SKP1, RBX1, and FBXW8. LT interacts with host BUB1; this interaction induces activation of a DNA damage response and promotes p53 stabilization and phosphorylation. Interacts with host FAM111A and this interaction is required for efficient viral replication and sustained viral gene expression in restrictive cell types. It depends on Mg(2+) as a cofactor. In terms of processing, phosphorylated on both serine and threonine residues. Phosphorylation on Ser-120 and Ser-123 inhibits viral replication, while phosphorylation on Thr-124 enhances replication by activating the DNA-binding domain. Phosphorylation on Thr-701 is required for binding to host FBW7gamma isoform. Dephosphorylated preferentially by PP2A on Ser-120, Ser-123, Ser-677 and perhaps Ser-679. Small t antigen inhibits the dephosphorylation by the AC form of PP2A. O-Glycosylated near the C-terminal region. Post-translationally, acetylated by CBP in a TP53-dependent manner.

The protein resides in the host nucleus. The catalysed reaction is Couples ATP hydrolysis with the unwinding of duplex DNA by translocating in the 3'-5' direction.. It catalyses the reaction ATP + H2O = ADP + phosphate + H(+). Its activity is regulated as follows. DNA helicase activity is inhibited by ATP-gamma-S. Isoform large T antigen is a key early protein essential for both driving viral replication and inducing cellular transformation. Plays a role in viral genome replication by driving entry of quiescent cells into the cell cycle and by autoregulating the synthesis of viral early mRNA. Displays highly oncogenic activities by corrupting the host cellular checkpoint mechanisms that guard cell division and the transcription, replication, and repair of DNA. Participates in the modulation of cellular gene expression preceeding viral DNA replication. This step involves binding to host key cell cycle regulators retinoblastoma protein RB1/pRb and TP53. Induces the disassembly of host E2F1 transcription factors from RB1, thus promoting transcriptional activation of E2F1-regulated S-phase genes. Inhibits host TP53 binding to DNA, abrogating the ability of TP53 to stimulate gene expression. Plays the role of a TFIID-associated factor (TAF) in transcription initiation for all three RNA polymerases, by stabilizing the TBP-TFIIA complex on promoters. Initiates viral DNA replication and unwinding via interactions with the viral origin of replication. Binds two adjacent sites in the SV40 origin. The replication fork movement is facilitated by Large T antigen helicase activity. Has processive 3'-5' DNA helicase activity which requires a short 3' single-stranded region and ATP; other (d)NTPs can partially replace ATP. Activates the transcription of viral late mRNA, through host TBP and TFIIA stabilization. Interferes with histone deacetylation mediated by HDAC1, leading to activation of transcription. May inactivate the growth-suppressing properties of the E3 ubiquitin ligase CUL7. Functionally, isoform 17kT antigen targets host RBL2 for degradation and promotes cell proliferation. Transactivates host cyclin A promoter through its J domain. In terms of biological role, unwinds G4 DNA (planar arrays of 4 guanine bases stabilized by hydrogen bonds, parallel and antiparallel arrays were tested); unwinding occurs in the 3'-5' direction, requires a 3' single-stranded end and hydrolyzable ATP. The chain is Large T antigen from Macaca (macaques).